Consider the following 430-residue polypeptide: Tol-Pal system protein TolB (430 aa).

The signal sequence occupies residues 1-21; the sequence is MKQALRVAFGFLILWASVLHA.

It belongs to the TolB family. The Tol-Pal system is composed of five core proteins: the inner membrane proteins TolA, TolQ and TolR, the periplasmic protein TolB and the outer membrane protein Pal. They form a network linking the inner and outer membranes and the peptidoglycan layer.

It is found in the periplasm. Functionally, part of the Tol-Pal system, which plays a role in outer membrane invagination during cell division and is important for maintaining outer membrane integrity. TolB occupies a key intermediary position in the Tol-Pal system because it communicates directly with both membrane-embedded components, Pal in the outer membrane and TolA in the inner membrane. This chain is Tol-Pal system protein TolB, found in Shigella boydii serotype 18 (strain CDC 3083-94 / BS512).